A 277-amino-acid chain; its full sequence is Omega-amidase NIT2 (277 aa).

The CN hydrolase domain occupies 4–248; sequence FRLAVVQLHV…ESVVYADIDL (245 aa). Glutamate 43 serves as the catalytic Proton acceptor. Residue lysine 112 is the Proton donor of the active site. The active-site Nucleophile is cysteine 153.

Belongs to the carbon-nitrogen hydrolase superfamily. NIT1/NIT2 family. In terms of assembly, homodimer.

It is found in the cytoplasm. It catalyses the reaction 2-oxoglutaramate + H2O = 2-oxoglutarate + NH4(+). The enzyme catalyses 2-oxosuccinamate + H2O = oxaloacetate + NH4(+). Has omega-amidase activity. The role of omega-amidase is to remove potentially toxic intermediates by converting 2-oxoglutaramate and 2-oxosuccinamate to biologically useful 2-oxoglutarate and oxaloacetate, respectively. This chain is Omega-amidase NIT2 (nit2), found in Danio rerio (Zebrafish).